The sequence spans 566 residues: Chromatin assembly factor 1 subunit B (566 aa).

6 WD repeats span residues 11-54, 64-103, 127-166, 169-208, 228-279, and 351-392; these read HNKE…DGKA, RHTK…ELEP, GHLE…KVSI, EHKS…VAFN, FHDD…RPMG, and IHYH…IPLK. Disordered stretches follow at residues 411–481 and 501–566; these read KSQP…NQPR and IPLK…KPNK. Polar residues-rich tracts occupy residues 425-437 and 469-478; these read TEGT…TLQP and QPASQSTKVN.

Belongs to the WD repeat HIR1 family. As to quaternary structure, interacts with CHAF1A.

It localises to the nucleus. Its function is as follows. Acts as a component of the histone chaperone complex chromatin assembly factor 1 (CAF-1), which assembles histone octamers onto DNA during replication and repair. CAF-1 performs the first step of the nucleosome assembly process, bringing newly synthesized histones H3 and H4 to replicating DNA; histones H2A/H2B can bind to this chromatin precursor subsequent to DNA replication to complete the histone octamer. This Gallus gallus (Chicken) protein is Chromatin assembly factor 1 subunit B (CHAF1B).